A 246-amino-acid chain; its full sequence is Phosphomannomutase 2 (246 aa).

N-acetylalanine is present on alanine 2. Catalysis depends on aspartate 12, which acts as the Nucleophile. Mg(2+)-binding residues include aspartate 12 and aspartate 14. Catalysis depends on aspartate 14, which acts as the Proton donor/acceptor. Alpha-D-mannose 1-phosphate is bound by residues arginine 21, arginine 123, arginine 134, and arginine 141. Lysine 149 bears the N6-acetyllysine mark. Residues serine 179 and aspartate 181 each contribute to the alpha-D-mannose 1-phosphate site. Positions 209, 221, 223, and 226 each coordinate Mg(2+).

This sequence belongs to the eukaryotic PMM family. In terms of assembly, homodimer.

The protein localises to the cytoplasm. It carries out the reaction alpha-D-mannose 1-phosphate = D-mannose 6-phosphate. It participates in nucleotide-sugar biosynthesis; GDP-alpha-D-mannose biosynthesis; alpha-D-mannose 1-phosphate from D-fructose 6-phosphate: step 2/2. Involved in the synthesis of the GDP-mannose and dolichol-phosphate-mannose required for a number of critical mannosyl transfer reactions. This is Phosphomannomutase 2 (PMM2) from Macaca fascicularis (Crab-eating macaque).